The primary structure comprises 114 residues: Cell cycle protein GpsB (114 aa).

Positions 42 to 77 (YQKMADMNNEVVKLSEENHKLKKELEELRLRVATSR) form a coiled coil. The disordered stretch occupies residues 74-99 (ATSRPQDNKSFSSNNTTTNTSSNNVD). Residues 85 to 97 (SSNNTTTNTSSNN) show a composition bias toward low complexity.

The protein belongs to the GpsB family. In terms of assembly, forms polymers through the coiled coil domains. Interacts with PBP1, MreC and EzrA.

The protein resides in the cytoplasm. Functionally, divisome component that associates with the complex late in its assembly, after the Z-ring is formed, and is dependent on DivIC and PBP2B for its recruitment to the divisome. Together with EzrA, is a key component of the system that regulates PBP1 localization during cell cycle progression. Its main role could be the removal of PBP1 from the cell pole after pole maturation is completed. Also contributes to the recruitment of PBP1 to the division complex. Not essential for septum formation. This chain is Cell cycle protein GpsB, found in Staphylococcus aureus (strain Mu3 / ATCC 700698).